The primary structure comprises 360 residues: Protein Wnt-2 (360 aa).

Residues 1 to 25 (MNAPLGGIWPWLPLLLTWLTPEVSS) form the signal peptide. 11 disulfides stabilise this stretch: cysteine 76/cysteine 87, cysteine 127/cysteine 135, cysteine 137/cysteine 157, cysteine 206/cysteine 220, cysteine 208/cysteine 215, cysteine 278/cysteine 309, cysteine 294/cysteine 304, cysteine 308/cysteine 348, cysteine 324/cysteine 339, cysteine 326/cysteine 336, and cysteine 331/cysteine 332. Serine 212 is lipidated: O-palmitoleoyl serine; by PORCN. Asparagine 295 carries an N-linked (GlcNAc...) asparagine glycan.

Belongs to the Wnt family. Palmitoleoylation is required for efficient binding to frizzled receptors. Depalmitoleoylation leads to Wnt signaling pathway inhibition.

The protein resides in the secreted. It is found in the extracellular space. Its subcellular location is the extracellular matrix. In terms of biological role, ligand for members of the frizzled family of seven transmembrane receptors. Functions in the canonical Wnt signaling pathway that results in activation of transcription factors of the TCF/LEF family. Functions as a upstream regulator of FGF10 expression. Plays an important role in embryonic lung development. May contribute to embryonic brain development by regulating the proliferation of dopaminergic precursors and neurons. This is Protein Wnt-2 (WNT2) from Felis catus (Cat).